A 180-amino-acid chain; its full sequence is MLKLLSEIGPVIAFFAGFFYGGGIQNATLYMLITSVICITLCYVIDKKVSKLSIISTTVLLVSGSITLISGDSMYIKIKPTILYVIFGIIFLMSGIRKNPFIKYALESIVRLKEESWIILSYRTAAFFFFMAVVNEIVWRNFSDETWVKFKVFGVIPVTFIFILLQLPLLLKNKLPDSKI.

A run of 5 helical transmembrane segments spans residues 25–45 (QNATLYMLITSVICITLCYVI), 49–69 (VSKLSIISTTVLLVSGSITLI), 76–96 (IKIKPTILYVIFGIIFLMSGI), 118–138 (IILSYRTAAFFFFMAVVNEIV), and 150–170 (FKVFGVIPVTFIFILLQLPLL).

The protein belongs to the YciB family.

The protein resides in the cell inner membrane. Plays a role in cell envelope biogenesis, maintenance of cell envelope integrity and membrane homeostasis. This is Inner membrane-spanning protein YciB from Rickettsia felis (strain ATCC VR-1525 / URRWXCal2) (Rickettsia azadi).